The chain runs to 176 residues: NADH:riboflavin 5'-phosphate oxidoreductase (176 aa).

In terms of biological role, provides the reduced form of flavin mononucleotide for the PIIA synthase reaction. The polypeptide is NADH:riboflavin 5'-phosphate oxidoreductase (snaC) (Streptomyces pristinaespiralis).